The following is a 182-amino-acid chain: MQFNIPTLLTLFRVILIPFFVLVFYLPVTWSPFAAALIFCVAAVTDWFDGFLARRWNQSTRFGAFLDPVADKVLVAIAMVLVTEHYHSWWVTLPAATMIAREIIISALREWMAELGKRSSVAVSWIGKVKTTAQMVALAWLLWRPNIWVEYVGIALFFVAAVLTLWSMLQYLSAARADLLDQ.

Topologically, residues 2 to 12 are cytoplasmic; the sequence is QFNIPTLLTLF. The helical transmembrane segment at 13–37 threads the bilayer; the sequence is RVILIPFFVLVFYLPVTWSPFAAAL. Over 38–60 the chain is Periplasmic; it reads IFCVAAVTDWFDGFLARRWNQST. A helical transmembrane segment spans residues 61 to 81; it reads RFGAFLDPVADKVLVAIAMVL. Residues 82–86 lie on the Cytoplasmic side of the membrane; it reads VTEHY. The chain crosses the membrane as a helical span at residues 87–107; it reads HSWWVTLPAATMIAREIIISA. The Periplasmic portion of the chain corresponds to 108–145; sequence LREWMAELGKRSSVAVSWIGKVKTTAQMVALAWLLWRP. A helical transmembrane segment spans residues 146 to 168; that stretch reads NIWVEYVGIALFFVAAVLTLWSM. Over 169 to 181 the chain is Cytoplasmic; it reads LQYLSAARADLLD.

This sequence belongs to the CDP-alcohol phosphatidyltransferase class-I family.

It is found in the cell inner membrane. It catalyses the reaction a CDP-1,2-diacyl-sn-glycerol + sn-glycerol 3-phosphate = a 1,2-diacyl-sn-glycero-3-phospho-(1'-sn-glycero-3'-phosphate) + CMP + H(+). It functions in the pathway phospholipid metabolism; phosphatidylglycerol biosynthesis; phosphatidylglycerol from CDP-diacylglycerol: step 1/2. Functionally, catalyzes the conversion of cytidine diphosphate diacylglycerol (CDP-DG) and glycerol 3-phosphate into phosphatidylglycerol. Essential for the synthesis of anionic phospholipids, thereby playing a role in balancing the ratio of zwitterionic and anionic phospholipids, which is thought to be important for normal membrane function. This is CDP-diacylglycerol--glycerol-3-phosphate 3-phosphatidyltransferase from Shigella boydii serotype 4 (strain Sb227).